The following is a 253-amino-acid chain: Lys-63-specific deubiquitinase BRCC36 (253 aa).

One can recognise an MPN domain in the interval 9-145; that stretch reads VELQTDVYMV…KEHEIFLNCF (137 aa). 3 residues coordinate Zn(2+): His-94, His-96, and Asp-107. Residues 94–107 carry the JAMM motif motif; the sequence is HSHPHITVCPSHVD. A coiled-coil region spans residues 227–249; sequence EKRIALNKLRATHLQRQLQELQK.

It belongs to the peptidase M67A family. BRCC36 subfamily. As to quaternary structure, component of the BRISC complex, at least composed of ABRAXAS2, BRCC3/BRCC36, BABAM2 and BABAM1/NBA1. Within the complex, interacts directly with ABRAXAS2. The heterodimer with ABRAXAS2 assembles into a heterotetramer. The BRISC complex binds polyubiquitin. Requires Zn(2+) as cofactor.

The protein resides in the cytoplasm. It localises to the nucleus. It is found in the cytoskeleton. Its subcellular location is the spindle pole. Functionally, metalloprotease that specifically cleaves 'Lys-63'-linked polyubiquitin chains, leaving the last ubiquitin chain attached to its substrates. Catalytic subunit of the BRISC complex; does not have activity by itself, but needs to be associated into a heterotetramer with ABRAXAS2 for minimal in vitro activity. Plays a role in regulating the onset of apoptosis via its role in modulating 'Lys-63'-linked ubiquitination of target proteins. Required for normal mitotic spindle assembly and microtubule attachment to kinetochores via its role in deubiquitinating spindle assembly factors. This Camponotus floridanus (Florida carpenter ant) protein is Lys-63-specific deubiquitinase BRCC36.